We begin with the raw amino-acid sequence, 20 residues long: Punein (20 aa).

In terms of domain architecture, Barwin spans 1–20; it reads YHYYNPEENHFCATWDASKP.

In terms of processing, the N-terminus is blocked.

This is Punein from Punica granatum (Pomegranate).